Here is a 607-residue protein sequence, read N- to C-terminus: Glycerophosphodiester phosphodiesterase domain-containing protein 5 (607 aa).

Topologically, residues 1–42 are cytoplasmic; the sequence is MVRHQPLQYYEPQLCLSCLTGIYGCRWKRYQRSHDDTTPWER. 2 cysteine pairs are disulfide-bonded: Cys15–Cys18 and Cys25–Cys571. A helical membrane pass occupies residues 43–63; it reads LWFLLLVCTFSLTLTWLYFWW. Topologically, residues 64–89 are extracellular; sequence GVHNDYDEFNWYLYNRMGYWSDWSVP. A helical transmembrane segment spans residues 90-110; that stretch reads ILVTSAAAFTYIAGLLVLALC. The Cytoplasmic segment spans residues 111–125; it reads HIAVGQQLNLHWIHK. The helical transmembrane segment at 126-146 threads the bilayer; sequence MGLVVILASTVVAMSAVAQLW. Over 147-160 the chain is Extracellular; the sequence is EDEWEVLLISLQGT. The helical transmembrane segment at 161–181 threads the bilayer; the sequence is APFLHIGALVAITALSWIVAG. At 182 to 192 the chain is on the cytoplasmic side; it reads QFARAERSSSQ. The chain crosses the membrane as a helical span at residues 193-213; sequence LTILCTFFAVVFTFYLIPLTI. Residues 214 to 496 are Extracellular-facing; sequence SSPCIMEKKD…PLWIMPPDEY (283 aa). The 258-residue stretch at 228–485 folds into the GP-PDE domain; that stretch reads PALIGHRGAP…DNSHTLSRVP (258 aa). Residues Asn301, Asn336, Asn352, Asn374, and Asn448 are each glycosylated (N-linked (GlcNAc...) asparagine). A helical membrane pass occupies residues 497 to 517; that stretch reads CLMWVTADLISFSLIIGIFVL. Over 518–607 the chain is Cytoplasmic; it reads QKWRLGGIRS…AKTVTEQSGH (90 aa). Residues 582 to 607 form a disordered region; sequence ANSTATPVGPRNAGSRAKTVTEQSGH.

This sequence belongs to the glycerophosphoryl diester phosphodiesterase family. Interacts with PRDX1; forms a mixed-disulfide with PRDX1, leading to disrupt intramolecular disulfide bond between Cys-25 and Cys-571. Post-translationally, intramolecular disulfide bond between Cys-25 and Cys-571 is reduced by PRDX1. In terms of tissue distribution, detected in brain, lung, heart, kidney and testis.

It localises to the endomembrane system. It is found in the cytoplasm. The protein localises to the perinuclear region. Its subcellular location is the cell projection. The protein resides in the growth cone. The enzyme catalyses a 1,2-diacyl-sn-glycero-3-phospho-(1D-myo-inositol-4,5-bisphosphate) + H2O = 1D-myo-inositol 1,4,5-trisphosphate + a 1,2-diacyl-sn-glycerol + H(+). It catalyses the reaction sn-glycerol 3-phosphocholine + H2O = sn-glycerol 3-phosphate + choline + H(+). With respect to regulation, inhibited by high level of NaCl or urea. In terms of biological role, glycerophosphodiester phosphodiesterase that promotes neurite formation and drives spinal motor neuron differentiation. Mediates the cleavage of glycosylphosphatidylinositol (GPI) anchor of target proteins: removes the GPI-anchor of RECK, leading to release RECK from the plasma membrane. May contribute to the osmotic regulation of cellular glycerophosphocholine. The sequence is that of Glycerophosphodiester phosphodiesterase domain-containing protein 5 from Mus musculus (Mouse).